The following is a 906-amino-acid chain: Transmembrane channel-like protein 2 (906 aa).

A disordered region spans residues Met1–Glu150. The Cytoplasmic portion of the chain corresponds to Met1–Asn263. Residues Pro69–His79 show a composition bias toward basic residues. Over residues Arg80–Ser127 the composition is skewed to basic and acidic residues. A compositionally biased stretch (low complexity) spans Ser135–Ser147. Residues Leu264–Pro284 form a helical membrane-spanning segment. The Extracellular segment spans residues Tyr285–Arg336. A helical membrane pass occupies residues Leu337 to Ile357. The Cytoplasmic segment spans residues Arg358 to Val431. Residues Leu432–Val452 form a helical membrane-spanning segment. Over Lys453–Arg508 the chain is Extracellular. The helical transmembrane segment at Ile509–His529 threads the bilayer. At Leu530–Asn693 the chain is on the cytoplasmic side. The helical transmembrane segment at Phe694–Ile714 threads the bilayer. The Extracellular segment spans residues Met715–Lys750. A helical membrane pass occupies residues Ile751 to Ala771. The Cytoplasmic segment spans residues Ile772 to His906. The segment at Glu800–His906 is disordered. 3 stretches are compositionally biased toward polar residues: residues Lys820–Ala846, Pro854–Pro866, and Ala886–Ser900.

The protein belongs to the TMC family. In terms of assembly, forms the MET channel composed of TMC dimer (TMC1 or TMC2), TMIE, TOMT, CIB (CIB2 or CIB3), LHFPL5 and PDH15. The interaction of TMC1 and TMC2 with TOMT is required for the transportation of TMC1/2 into the stereocilia of hair cells. Interacts (via N-terminus) with both isoforms CD1 and CD3 of PCDH15. Can form a heterodimer with TMC1, TMC5 or TMC7. Detected in fetal cochlea.

The protein localises to the cell membrane. It catalyses the reaction Ca(2+)(in) = Ca(2+)(out). Functionally, pore-forming subunit of the mechanotransducer (MET) non-selective cation channel complex located at the tips of stereocilia of cochlear hair cells and that mediates sensory transduction in the auditory system. The MET complex is composed of two dimeric pore-forming ion-conducting transmembrane TMC (TMC1 or TMC2) subunits, and aided by several auxiliary proteins including LHFPL5, TMIE, CIB2/3 and TOMT, and the tip-link PCDH15. MET channel is activated by tension in the tip-link extending from the side wall of one stereocilium to the tip of the adjacent shorter stereocilium, where the channel is located. TMC2 MET channel is highly permeable to calcium and likely transports monovalent cations. Also involved in vestibular hair cell transduction current of the mammalian inner ear. The sequence is that of Transmembrane channel-like protein 2 from Homo sapiens (Human).